The sequence spans 604 residues: Inositol-3-phosphate synthase 1 (604 aa).

Residues Gly-88, Gly-89, Asn-90, Asn-91, Asp-163, Ser-198, Val-199, Gln-210, Arg-213, Ser-251, Gly-252, Asn-253, Thr-254, Ser-303, Asp-327, Leu-328, Thr-330, Asn-361, Asn-362, Asp-363, Lys-376, Gly-456, Asp-457, Asp-485, and Ser-486 each coordinate NAD(+).

Belongs to the myo-inositol 1-phosphate synthase family. NAD(+) is required as a cofactor.

The enzyme catalyses D-glucose 6-phosphate = 1D-myo-inositol 3-phosphate. The protein operates within polyol metabolism; myo-inositol biosynthesis; myo-inositol from D-glucose 6-phosphate: step 1/2. Its function is as follows. Key enzyme in myo-inositol biosynthesis pathway that catalyzes the conversion of glucose 6-phosphate to 1-myo-inositol 1-phosphate in a NAD-dependent manner. Rate-limiting enzyme in the synthesis of all inositol-containing compounds. De novo-synthesized myo-inositol is essential for incorporation into GPI (glycosylphosphatidylinositol) glycolipids during intra-erythrocytic development. The sequence is that of Inositol-3-phosphate synthase 1 from Plasmodium falciparum (isolate 3D7).